The following is a 493-amino-acid chain: Bifunctional protein GlmU (493 aa).

Residues 1 to 246 (MTGELDVDGE…SWLVAGINDR (246 aa)) are pyrophosphorylase. UDP-N-acetyl-alpha-D-glucosamine is bound by residues 21–24 (LAAG), K35, Q88, 93–94 (GT), 117–119 (SGD), G156, E171, N186, and N244. D119 is a Mg(2+) binding site. A Mg(2+)-binding site is contributed by N244. A linker region spans residues 247-267 (VQLTAAATELNARIIRRWQLA). Positions 268–493 (GVTIHDPRTT…DGPADDASDA (226 aa)) are N-acetyltransferase. R349 and K367 together coordinate UDP-N-acetyl-alpha-D-glucosamine. Catalysis depends on H379, which acts as the Proton acceptor. UDP-N-acetyl-alpha-D-glucosamine contacts are provided by Y382 and N393. Acetyl-CoA contacts are provided by residues A396, 402-403 (NY), S421, and A439. The disordered stretch occupies residues 470–493 (RPGTPEARAAVEAADGPADDASDA).

In the N-terminal section; belongs to the N-acetylglucosamine-1-phosphate uridyltransferase family. It in the C-terminal section; belongs to the transferase hexapeptide repeat family. In terms of assembly, homotrimer. Mg(2+) is required as a cofactor.

The protein localises to the cytoplasm. The enzyme catalyses alpha-D-glucosamine 1-phosphate + acetyl-CoA = N-acetyl-alpha-D-glucosamine 1-phosphate + CoA + H(+). The catalysed reaction is N-acetyl-alpha-D-glucosamine 1-phosphate + UTP + H(+) = UDP-N-acetyl-alpha-D-glucosamine + diphosphate. The protein operates within nucleotide-sugar biosynthesis; UDP-N-acetyl-alpha-D-glucosamine biosynthesis; N-acetyl-alpha-D-glucosamine 1-phosphate from alpha-D-glucosamine 6-phosphate (route II): step 2/2. It functions in the pathway nucleotide-sugar biosynthesis; UDP-N-acetyl-alpha-D-glucosamine biosynthesis; UDP-N-acetyl-alpha-D-glucosamine from N-acetyl-alpha-D-glucosamine 1-phosphate: step 1/1. It participates in bacterial outer membrane biogenesis; LPS lipid A biosynthesis. Its function is as follows. Catalyzes the last two sequential reactions in the de novo biosynthetic pathway for UDP-N-acetylglucosamine (UDP-GlcNAc). The C-terminal domain catalyzes the transfer of acetyl group from acetyl coenzyme A to glucosamine-1-phosphate (GlcN-1-P) to produce N-acetylglucosamine-1-phosphate (GlcNAc-1-P), which is converted into UDP-GlcNAc by the transfer of uridine 5-monophosphate (from uridine 5-triphosphate), a reaction catalyzed by the N-terminal domain. The sequence is that of Bifunctional protein GlmU from Clavibacter sepedonicus (Clavibacter michiganensis subsp. sepedonicus).